Consider the following 485-residue polypeptide: Probable outer membrane usher protein LpfC' (485 aa).

Belongs to the fimbrial export usher family.

It localises to the cell outer membrane. Its function is as follows. Part of the lpfABCC'DE fimbrial operon. LP fimbriae may participate in the interaction with eukaryotic cells by assisting in microcolony formation. Could be involved in the export and assembly of the fimbrial subunits across the outer membrane. The polypeptide is Probable outer membrane usher protein LpfC' (lpfC') (Escherichia coli O157:H7).